The sequence spans 313 residues: Putative S-adenosyl-L-methionine-dependent methyltransferase MUL_0706 (313 aa).

Residues Asp-132 and 161–162 (DL) each bind S-adenosyl-L-methionine.

It belongs to the UPF0677 family.

Its function is as follows. Exhibits S-adenosyl-L-methionine-dependent methyltransferase activity. This Mycobacterium ulcerans (strain Agy99) protein is Putative S-adenosyl-L-methionine-dependent methyltransferase MUL_0706.